The chain runs to 291 residues: 33 kDa chaperonin (291 aa).

Disulfide bonds link Cys237-Cys239 and Cys270-Cys273.

It belongs to the HSP33 family. Under oxidizing conditions two disulfide bonds are formed involving the reactive cysteines. Under reducing conditions zinc is bound to the reactive cysteines and the protein is inactive.

The protein resides in the cytoplasm. Redox regulated molecular chaperone. Protects both thermally unfolding and oxidatively damaged proteins from irreversible aggregation. Plays an important role in the bacterial defense system toward oxidative stress. This Bacillus cytotoxicus (strain DSM 22905 / CIP 110041 / 391-98 / NVH 391-98) protein is 33 kDa chaperonin.